We begin with the raw amino-acid sequence, 151 residues long: Small ribosomal subunit protein eS6 (151 aa).

The protein belongs to the eukaryotic ribosomal protein eS6 family.

The protein is Small ribosomal subunit protein eS6 of Pyrobaculum calidifontis (strain DSM 21063 / JCM 11548 / VA1).